We begin with the raw amino-acid sequence, 223 residues long: uncharacterized protein (223 aa).

The segment at 33 to 67 (CPICGGKGTLKAIQFIHRIPYFGEVMESTVVCERC) adopts a C4-type zinc-finger fold.

It belongs to the ZPR1 family.

This is an uncharacterized protein from Pyrococcus horikoshii (strain ATCC 700860 / DSM 12428 / JCM 9974 / NBRC 100139 / OT-3).